The primary structure comprises 154 residues: Myoglobin (154 aa).

Positions 2 to 148 (GLSDGEWTLV…FRNDMAAQYK (147 aa)) constitute a Globin domain. Ser-4 is modified (phosphoserine). Position 65 (His-65) interacts with nitrite. His-65 serves as a coordination point for O2. Thr-68 carries the phosphothreonine modification. His-94 lines the heme b pocket.

Belongs to the globin family. As to quaternary structure, monomeric.

It is found in the cytoplasm. It localises to the sarcoplasm. It carries out the reaction Fe(III)-heme b-[protein] + nitric oxide + H2O = Fe(II)-heme b-[protein] + nitrite + 2 H(+). The catalysed reaction is H2O2 + AH2 = A + 2 H2O. Its function is as follows. Monomeric heme protein which primary function is to store oxygen and facilitate its diffusion within muscle tissues. Reversibly binds oxygen through a pentacoordinated heme iron and enables its timely and efficient release as needed during periods of heightened demand. Depending on the oxidative conditions of tissues and cells, and in addition to its ability to bind oxygen, it also has a nitrite reductase activity whereby it regulates the production of bioactive nitric oxide. Under stress conditions, like hypoxia and anoxia, it also protects cells against reactive oxygen species thanks to its pseudoperoxidase activity. The polypeptide is Myoglobin (Capra hircus (Goat)).